The sequence spans 443 residues: 2-hydroxyethylphosphonate dioxygenase (443 aa).

Positions 8–63 (LAHWMNARKYTAAQTADLAGLPLDDLRRLLGDEANEPDPAAATALAEALSVEPSQL) constitute an HTH cro/C1-type 1 domain. K16 contacts substrate. The segment at residues 19 to 38 (AAQTADLAGLPLDDLRRLLG) is a DNA-binding region (H-T-H motif). 2 residues coordinate substrate: Y98 and N126. H129 is a binding site for Fe cation. Residues E176, H182, and S196 each contribute to the substrate site. H182 is a binding site for Fe cation. The HTH cro/C1-type 2 domain maps to 234–290 (VLDLFLARRAHTRTSAAEAAGVPPADLEAALRSPASETGLTVLRTLGRALGFDYRVL). Positions 245-265 (TRTSAAEAAGVPPADLEAALR) form a DNA-binding region, H-T-H motif.

Belongs to the non-heme iron-dependent dioxygenase family. In terms of assembly, homodimer. The cofactor is Fe(2+).

The catalysed reaction is 2-hydroxyethylphosphonate + O2 = hydroxymethylphosphonate + formate + H(+). Its pathway is secondary metabolite biosynthesis; bialaphos biosynthesis. Non-heme-dependent dioxygenase that catalyzes the conversion of 2-hydroxyethylphosphonate (HEP) to hydroxymethylphosphonate (HMP) in the biosynthesis of phosphinothricin tripeptide (PTT), also known as bialaphos (BA), a natural-product antibiotic and potent herbicide. PTT contains the unusual amino acid phosphinothricin attached to 2 alanine residues. Synthetic phosphinothricin (glufosinate) is a key component of commercial herbicides. The protein is 2-hydroxyethylphosphonate dioxygenase (hepD) of Streptomyces viridochromogenes (strain DSM 40736 / JCM 4977 / BCRC 1201 / Tue 494).